An 85-amino-acid polypeptide reads, in one-letter code: Electron transfer flavoprotein regulatory factor 1 homolog (85 aa).

The protein belongs to the complex I LYR family. In terms of tissue distribution, highly expressed in the larval fat body.

Its subcellular location is the mitochondrion. In terms of biological role, acts as a regulator of the electron transfer flavoprotein by promoting the removal of flavin from the ETF holoenzyme. May act with the ETF complex to coordinate lipid homeostasis in the fat body in response to stage-specific demands. This is Electron transfer flavoprotein regulatory factor 1 homolog from Drosophila melanogaster (Fruit fly).